Consider the following 263-residue polypeptide: Acetylglutamate kinase (263 aa).

Substrate contacts are provided by residues Gly-48–Gly-49, Arg-70, and Asn-162.

The protein belongs to the acetylglutamate kinase family. ArgB subfamily.

It localises to the cytoplasm. It catalyses the reaction N-acetyl-L-glutamate + ATP = N-acetyl-L-glutamyl 5-phosphate + ADP. Its pathway is amino-acid biosynthesis; L-arginine biosynthesis; N(2)-acetyl-L-ornithine from L-glutamate: step 2/4. Functionally, catalyzes the ATP-dependent phosphorylation of N-acetyl-L-glutamate. This is Acetylglutamate kinase from Vibrio vulnificus (strain YJ016).